The sequence spans 73 residues: Translational regulator CsrA (73 aa).

The tract at residues 54-73 is disordered; sequence ENRAASDSPWSPNSLPQLPV. The segment covering 61–73 has biased composition (polar residues); that stretch reads SPWSPNSLPQLPV.

The protein belongs to the CsrA/RsmA family. In terms of assembly, homodimer; the beta-strands of each monomer intercalate to form a hydrophobic core, while the alpha-helices form wings that extend away from the core.

The protein localises to the cytoplasm. Its function is as follows. A translational regulator that binds mRNA to regulate translation initiation and/or mRNA stability. Usually binds in the 5'-UTR at or near the Shine-Dalgarno sequence preventing ribosome-binding, thus repressing translation. Its main target seems to be the major flagellin gene, while its function is anatagonized by FliW. This chain is Translational regulator CsrA, found in Treponema pallidum (strain Nichols).